The chain runs to 124 residues: Large ribosomal subunit protein bL19 (124 aa).

It belongs to the bacterial ribosomal protein bL19 family.

Its function is as follows. This protein is located at the 30S-50S ribosomal subunit interface and may play a role in the structure and function of the aminoacyl-tRNA binding site. In Orientia tsutsugamushi (strain Boryong) (Rickettsia tsutsugamushi), this protein is Large ribosomal subunit protein bL19.